The following is a 361-amino-acid chain: Glutamine synthetase (361 aa).

The GS beta-grasp domain maps to 23 to 103; the sequence is CQAMYIWVDG…VLCETYKYNK (81 aa). Residues 110–361 enclose the GS catalytic domain; the sequence is QRWKCMEVMT…LVRTICLNEQ (252 aa). Residue Glu-131 coordinates ATP. Residues Glu-131, Glu-133, and Glu-200 each coordinate Mn(2+). ATP is bound at residue 200–205; it reads EFQVGP. 243-244 is an L-glutamate binding site; that stretch reads DW. His-250 contributes to the Mn(2+) binding site. Residues 252–254, Arg-316, and Arg-321 contribute to the ATP site; that span reads NFS. Position 316 (Arg-316) interacts with L-glutamate. 333 to 335 is a binding site for ADP; sequence YLE. Glu-335 serves as a coordination point for Mn(2+). Arg-337 serves as a coordination point for L-glutamate.

This sequence belongs to the glutamine synthetase family. Mg(2+) serves as cofactor. Mn(2+) is required as a cofactor.

The protein localises to the cytoplasm. It is found in the cytosol. It localises to the microsome. Its subcellular location is the mitochondrion. The catalysed reaction is L-glutamate + NH4(+) + ATP = L-glutamine + ADP + phosphate + H(+). Functionally, glutamine synthetase that catalyzes the ATP-dependent conversion of glutamate and ammonia to glutamine. The polypeptide is Glutamine synthetase (Panulirus argus (Caribbean spiny lobster)).